Here is a 37-residue protein sequence, read N- to C-terminus: Large ribosomal subunit protein bL36B (37 aa).

Belongs to the bacterial ribosomal protein bL36 family.

The sequence is that of Large ribosomal subunit protein bL36B from Aeromonas salmonicida (strain A449).